The following is a 561-amino-acid chain: Putative transport protein DNO_0009 (561 aa).

5 helical membrane passes run 4 to 24, 29 to 49, 74 to 94, 104 to 124, and 166 to 186; these read VAIT…LGNI, VGLS…IMNL, FGLI…FFAS, AFAA…YYLF, and MGYA…MWLI. 2 consecutive RCK C-terminal domains span residues 198–283 and 285–369; these read LQFF…ILGE and AGHE…LIGN. 6 helical membrane-spanning segments follow: residues 379–399, 411–433, 447–467, 472–492, 501–521, and 538–558; these read MLPV…PIYL, AGGP…LYWF, IVLF…STLL, FSWI…AGII, YLTI…LAFA, and VYPL…VLLW.

The protein belongs to the AAE transporter (TC 2.A.81) family. YidE subfamily.

The protein localises to the cell membrane. This Dichelobacter nodosus (strain VCS1703A) protein is Putative transport protein DNO_0009.